We begin with the raw amino-acid sequence, 385 residues long: Flap endonuclease 1 (385 aa).

The interval 1-105 (MGIKGLNAII…HELSKRSARR (105 aa)) is N-domain. Asp-34 contributes to the Mg(2+) binding site. 2 residues coordinate DNA: Arg-47 and Arg-71. Residues Asp-87, Glu-156, Glu-158, Asp-177, and Asp-179 each contribute to the Mg(2+) site. Residues 120–251 (EKLKHERRLV…VTALKLIKEH (132 aa)) form an I-domain region. Glu-156 contacts DNA. Residues Gly-229 and Asp-231 each contribute to the DNA site. Asp-231 provides a ligand contact to Mg(2+). The segment at 338–346 (VQGRLDGFF) is interaction with PCNA. The segment covering 356–370 (LAAANAKAKSTKAGK) has biased composition (low complexity). The segment at 356-385 (LAAANAKAKSTKAGKQATKGKVGKPGRPRK) is disordered. Basic residues predominate over residues 376–385 (KVGKPGRPRK).

This sequence belongs to the XPG/RAD2 endonuclease family. FEN1 subfamily. In terms of assembly, interacts with PCNA. Three molecules of FEN1 bind to one PCNA trimer with each molecule binding to one PCNA monomer. PCNA stimulates the nuclease activity without altering cleavage specificity. Mg(2+) serves as cofactor. Post-translationally, phosphorylated. Phosphorylation upon DNA damage induces relocalization to the nuclear plasma.

It localises to the nucleus. The protein resides in the nucleolus. The protein localises to the nucleoplasm. It is found in the mitochondrion. Functionally, structure-specific nuclease with 5'-flap endonuclease and 5'-3' exonuclease activities involved in DNA replication and repair. During DNA replication, cleaves the 5'-overhanging flap structure that is generated by displacement synthesis when DNA polymerase encounters the 5'-end of a downstream Okazaki fragment. It enters the flap from the 5'-end and then tracks to cleave the flap base, leaving a nick for ligation. Also involved in the long patch base excision repair (LP-BER) pathway, by cleaving within the apurinic/apyrimidinic (AP) site-terminated flap. Acts as a genome stabilization factor that prevents flaps from equilibrating into structures that lead to duplications and deletions. Also possesses 5'-3' exonuclease activity on nicked or gapped double-stranded DNA, and exhibits RNase H activity. Also involved in replication and repair of rDNA and in repairing mitochondrial DNA. This chain is Flap endonuclease 1, found in Lachancea thermotolerans (strain ATCC 56472 / CBS 6340 / NRRL Y-8284) (Yeast).